The primary structure comprises 311 residues: Fructose-1,6-bisphosphatase class 1 (311 aa).

Positions 90, 110, 112, and 113 each coordinate Mg(2+). Substrate-binding positions include 113–116 (DGSS), tyrosine 221, and lysine 251. Glutamate 257 serves as a coordination point for Mg(2+).

The protein belongs to the FBPase class 1 family. Homotetramer. Mg(2+) is required as a cofactor.

It is found in the cytoplasm. It catalyses the reaction beta-D-fructose 1,6-bisphosphate + H2O = beta-D-fructose 6-phosphate + phosphate. It functions in the pathway carbohydrate biosynthesis; gluconeogenesis. In Methanospirillum hungatei JF-1 (strain ATCC 27890 / DSM 864 / NBRC 100397 / JF-1), this protein is Fructose-1,6-bisphosphatase class 1.